The sequence spans 239 residues: 1-(5-phosphoribosyl)-5-[(5-phosphoribosylamino)methylideneamino] imidazole-4-carboxamide isomerase (239 aa).

Asp8 acts as the Proton acceptor in catalysis. Asp129 (proton donor) is an active-site residue.

It belongs to the HisA/HisF family.

The protein resides in the cytoplasm. The enzyme catalyses 1-(5-phospho-beta-D-ribosyl)-5-[(5-phospho-beta-D-ribosylamino)methylideneamino]imidazole-4-carboxamide = 5-[(5-phospho-1-deoxy-D-ribulos-1-ylimino)methylamino]-1-(5-phospho-beta-D-ribosyl)imidazole-4-carboxamide. It functions in the pathway amino-acid biosynthesis; L-histidine biosynthesis; L-histidine from 5-phospho-alpha-D-ribose 1-diphosphate: step 4/9. The sequence is that of 1-(5-phosphoribosyl)-5-[(5-phosphoribosylamino)methylideneamino] imidazole-4-carboxamide isomerase from Bacillus cereus (strain ATCC 10987 / NRS 248).